Here is a 298-residue protein sequence, read N- to C-terminus: Small ribosomal subunit biogenesis GTPase RsgA (298 aa).

Residues 67–228 enclose the CP-type G domain; sequence TNELIRPPIC…VADTPGFSSL (162 aa). A GTP-binding site is contributed by 116–119; that stretch reads TKMD. A Phosphothreonine modification is found at Thr166. 171-179 contacts GTP; that stretch reads GQSGVGKSS. The Zn(2+) site is built by Cys252, Cys257, His259, and Cys265.

Belongs to the TRAFAC class YlqF/YawG GTPase family. RsgA subfamily. As to quaternary structure, monomer, but able to form dimers. Associates with 30S ribosomal subunit; a phospho-mimetic mutation increases association. Probably binds 16S rRNA. Requires Zn(2+) as cofactor. In vitro phosphorylated mostly on Thr (with lower signal on Ser) by PrkC in the presence of poly-L-Lys or myelin basic protein, dephosphorylated by PrpC. Most in vitro phosphorylation occurs on Thr-166, in vivo phosphorylation has not been detected, but it might vary during the cell cycle.

It is found in the cytoplasm. One of several proteins that assist in the late maturation steps of the functional core of the 30S ribosomal subunit. Helps release RbfA from mature subunits. May play a role in the assembly of ribosomal proteins into the subunit. Circularly permuted GTPase with a low level of activity and slow catalytic turnover, does not act on ATP. GTPase activity is stimulated by the presence of 30S or 70S ribosomes, phosphorylation increases stimulation. Depletion results in increased sensitivity to protein synthesis inhibitors that block the peptide channel or peptidyl transferase center on the ribosome, suggesting this protein functions in conjunction with the ribosome in vivo. Decreasing levels of protein lead to an increase in free 30S and 50S ribosomal subunits and a decrease in assembled 70S ribosomes. Suggested to serve as a specific transcription factor for proteins involved in late stages of peptidoglycan synthesis. The polypeptide is Small ribosomal subunit biogenesis GTPase RsgA (Bacillus subtilis (strain 168)).